The primary structure comprises 240 residues: Coat protein (240 aa).

The segment covering 1 to 10 (MATPSTQTTD) has biased composition (polar residues). The disordered stretch occupies residues 1–27 (MATPSTQTTDPKPANADLSDPNRAPSL).

It belongs to the potexvirus capsid protein family.

The protein resides in the virion. Its function is as follows. Required for genome encapsidation. Forms ribonucleoprotein complexes along with TGB1 helicase and viral RNA. In Narcissus pseudonarcissus (Daffodil), this protein is Coat protein.